The chain runs to 117 residues: MEIAIIALFIVSIALIAFSYSQRDPMKDVEQELETLQLSAMQEIYKLKKKMTVLEEELLETNLVIRKSKQNDINQKIAKQILSKYNNGMSAEAIAKAEHVSVEDVNTIIKDNEKVLV.

The chain crosses the membrane as a helical span at residues 1 to 21; it reads MEIAIIALFIVSIALIAFSYS. Residues 38–67 adopt a coiled-coil conformation; it reads LSAMQEIYKLKKKMTVLEEELLETNLVIRK.

Its subcellular location is the cell membrane. This is an uncharacterized protein from Bacillus subtilis (strain 168).